The following is a 59-amino-acid chain: Preprotein translocase subunit SecG (59 aa).

At 1–33 (MARRESSGGSGGLMSSAGLMRYFEAEESAIKID) the chain is on the cytoplasmic side. Residues 34 to 55 (PKTVIIAAVASGAFIWILNFTY) traverse the membrane as a helical segment. Over 56-59 (GRFW) the chain is Extracellular.

The protein belongs to the SEC61-beta family. As to quaternary structure, component of the protein translocase complex. Heterotrimer consisting of alpha (SecY), beta (SecG) and gamma (SecE) subunits. Can form oligomers of the heterotrimer.

It localises to the cell membrane. Functionally, involved in protein export. The function of the beta subunit is unknown, but it may be involved in stabilization of the trimeric complex. The polypeptide is Preprotein translocase subunit SecG (Methanocella arvoryzae (strain DSM 22066 / NBRC 105507 / MRE50)).